Reading from the N-terminus, the 491-residue chain is Serine/threonine-protein phosphatase 2A regulatory subunit B'' subunit delta (491 aa).

The region spanning Thr331 to Arg366 is the EF-hand domain. Positions 344, 346, 348, and 355 each coordinate Ca(2+). 2 stretches are compositionally biased toward acidic residues: residues Ala460–Asp473 and Ala481–Leu491. The interval Ala460 to Leu491 is disordered.

In terms of assembly, PP2A consists of a common heterodimeric core enzyme, composed of a 36 kDa catalytic subunit (subunit C) and a 65 kDa constant regulatory subunit (PR65 or subunit A), that associates with a variety of regulatory subunits. Proteins that associate with the core dimer include three families of regulatory subunits B (the R2/B/PR55/B55, R3/B''/PR72/PR130/PR59 and R5/B'/B56 families), the 48 kDa variable regulatory subunit, viral proteins, and cell signaling molecules. In terms of tissue distribution, expressed in testis, kidney, liver, lung, spleen, brain and heart.

The B regulatory subunit might modulate substrate selectivity and catalytic activity, and might also direct the localization of the catalytic enzyme to a particular subcellular compartment. Interacts with retinoblastoma-related protein p107 (in vivo). May target PP2A core dimer to p107 resulting in dephosphorylation of p107. This is Serine/threonine-protein phosphatase 2A regulatory subunit B'' subunit delta (Ppp2r3d) from Mus musculus (Mouse).